A 230-amino-acid chain; its full sequence is RNA chaperone ProQ (230 aa).

The interval 106 to 181 (AKARVQAQRA…EERHTPVSDI (76 aa)) is disordered. A compositionally biased stretch (basic and acidic residues) spans 146–155 (RRKDNAERKP). Residues 158-167 (AKPAAAAKPS) are compositionally biased toward low complexity.

Belongs to the ProQ family.

It is found in the cytoplasm. Its function is as follows. RNA chaperone with significant RNA binding, RNA strand exchange and RNA duplexing activities. May regulate ProP activity through an RNA-based, post-transcriptional mechanism. In Cronobacter sakazakii (strain ATCC BAA-894) (Enterobacter sakazakii), this protein is RNA chaperone ProQ.